Reading from the N-terminus, the 355-residue chain is UDP-N-acetylglucosamine--N-acetylmuramyl-(pentapeptide) pyrophosphoryl-undecaprenol N-acetylglucosamine transferase (355 aa).

UDP-N-acetyl-alpha-D-glucosamine contacts are provided by residues 14–16, N126, R162, S190, I243, 262–267, and Q287; these read TGG and ALTVSE.

This sequence belongs to the glycosyltransferase 28 family. MurG subfamily.

Its subcellular location is the cell inner membrane. The catalysed reaction is di-trans,octa-cis-undecaprenyl diphospho-N-acetyl-alpha-D-muramoyl-L-alanyl-D-glutamyl-meso-2,6-diaminopimeloyl-D-alanyl-D-alanine + UDP-N-acetyl-alpha-D-glucosamine = di-trans,octa-cis-undecaprenyl diphospho-[N-acetyl-alpha-D-glucosaminyl-(1-&gt;4)]-N-acetyl-alpha-D-muramoyl-L-alanyl-D-glutamyl-meso-2,6-diaminopimeloyl-D-alanyl-D-alanine + UDP + H(+). The protein operates within cell wall biogenesis; peptidoglycan biosynthesis. Cell wall formation. Catalyzes the transfer of a GlcNAc subunit on undecaprenyl-pyrophosphoryl-MurNAc-pentapeptide (lipid intermediate I) to form undecaprenyl-pyrophosphoryl-MurNAc-(pentapeptide)GlcNAc (lipid intermediate II). This is UDP-N-acetylglucosamine--N-acetylmuramyl-(pentapeptide) pyrophosphoryl-undecaprenol N-acetylglucosamine transferase from Vibrio vulnificus (strain CMCP6).